Consider the following 101-residue polypeptide: uncharacterized protein (101 aa).

It is found in the mitochondrion. This is an uncharacterized protein from Arabidopsis thaliana (Mouse-ear cress).